The chain runs to 65 residues: Large ribosomal subunit protein bL35 (65 aa).

The tract at residues 1–51 (MPKIKTNRGAAKRFRKSASGRVKRGNAFTSHILTHKTRKNKRNLRGTSMVS) is disordered. Basic residues-rich tracts occupy residues 10-24 (AAKRFRKSASGRVKR) and 33-44 (LTHKTRKNKRNL).

Belongs to the bacterial ribosomal protein bL35 family.

The polypeptide is Large ribosomal subunit protein bL35 (Pelobacter propionicus (strain DSM 2379 / NBRC 103807 / OttBd1)).